A 502-amino-acid polypeptide reads, in one-letter code: Cytochrome P450 monooxygenase verC (502 aa).

A helical transmembrane segment spans residues 9–29 (IAALPMVSLLGAALIVVSVLG). Asn-124, Asn-190, Asn-271, and Asn-342 each carry an N-linked (GlcNAc...) asparagine glycan. Cys-444 provides a ligand contact to heme.

It belongs to the cytochrome P450 family. It depends on heme as a cofactor.

It is found in the membrane. It participates in mycotoxin biosynthesis. Cytochrome P450 monooxygenase; part of the gene cluster that mediates the biosynthesis of 11'-deoxyverticillin A, one of the dimeric epipolythiodioxopiperazines (ETPs) from the verticillin family that act as mycotoxins. 11'-deoxyverticillin A is required for normal conidiation. The nonribosomal peptide synthetase verP is speculated to be responsible for condensation of amino acids to form the carbon skeleton of verticillin, whereas the cluster-specific tailoring enzymes are involved in further modifications leading to the production of 11'-deoxyverticillin A. The polypeptide is Cytochrome P450 monooxygenase verC (Clonostachys rogersoniana).